The primary structure comprises 912 residues: MLNTIVRKLVGSKNEREVKRMRKACEAINALEPTFEALDDASLTAKTAEFRQRLEAGESLDKLLPEAFAVVREASKRVMGMRHFDVQMVGGMTLHEGRIAEMKTGEGKTLVGTLAVYLNALTGKGVHVVTVNDYLASRDAEWMRPLYEFLGLSVGTIFSGQSSTQKREAYACDITYGTNNEFGFDYLRDNMAFSLDDKVQRSLHYAIIDEVDSILIDEARTPLIISGPVEENVDMYRRINQLSVQLEECSDEEDPTSGDFILDEKQKQVELTETGHQKLEGLLRDAEMLGQDDSLYSAQNLGLLQHVHSALRARHLYHRDVDYIVANGEVVIVDEHTGRTMHGRRWSEGLHQAVEAKEGVTIQKESQTLASTTFQNYFRLYDKLSGMTGTADTEAFEFRQIYGLDVMVIPTNRPLVRVDHNDLVYMSGEEKFEAIIEDVKTQREAGRPVLVGTASIETSEYLAKLMQQHQIPHNVLNAKQHQSEAEIISQAGRPGAVTIATNMAGRGTDIVLGGNWEAEAAALDDPSDEQIEALKAAWQERHDAVLAAGGLHVIGSERHESRRIDNQLRGRAGRQGDPGSTRFFLSLEDNLMRLFGSDRVQRLMQALGLEHGEAIEHKMVSNAVERAQKKVEGRNFDIRKQLLEYDDVSNDQRRVVYQQRDEVLAADDLSSNIAEIREQVLSEAISSYVPPQSLAEQWDLPGLQDYLKQEFNLDVPLVQWAEEDEHFHEELLRERLHDQHRGLFTSKAEAVGPELMRRFEKQVMLQVLDTRWKEHLQHMDHLRRGIHLRGYAQKNPKQEYKREAFELFQALLGNIKHDVIRILSHVQVRRQEEVDELERERRATLERERAVSQPVHEDAVASAEAVAESEEASGESADDAQPVRRDGPKVGRNDLCPCGSGKKYKHCHGKLN.

Residues Q87, 105–109, and D509 each bind ATP; that span reads GEGKT. Positions 847-859 are enriched in basic and acidic residues; it reads RERAVSQPVHEDA. The tract at residues 847–912 is disordered; it reads RERAVSQPVH…KYKHCHGKLN (66 aa). Residues 867–878 show a composition bias toward acidic residues; sequence AESEEASGESAD. A compositionally biased stretch (basic and acidic residues) spans 881 to 892; the sequence is QPVRRDGPKVGR. Positions 896, 898, 907, and 908 each coordinate Zn(2+). Residues 902-912 are compositionally biased toward basic residues; it reads KKYKHCHGKLN.

It belongs to the SecA family. Monomer and homodimer. Part of the essential Sec protein translocation apparatus which comprises SecA, SecYEG and auxiliary proteins SecDF-YajC and YidC. The cofactor is Zn(2+).

The protein resides in the cell inner membrane. Its subcellular location is the cytoplasm. The enzyme catalyses ATP + H2O + cellular proteinSide 1 = ADP + phosphate + cellular proteinSide 2.. In terms of biological role, part of the Sec protein translocase complex. Interacts with the SecYEG preprotein conducting channel. Has a central role in coupling the hydrolysis of ATP to the transfer of proteins into and across the cell membrane, serving both as a receptor for the preprotein-SecB complex and as an ATP-driven molecular motor driving the stepwise translocation of polypeptide chains across the membrane. The chain is Protein translocase subunit SecA from Chromohalobacter salexigens (strain ATCC BAA-138 / DSM 3043 / CIP 106854 / NCIMB 13768 / 1H11).